Here is a 1167-residue protein sequence, read N- to C-terminus: Pesticidal crystal protein Cry1Ja (1167 aa).

It belongs to the delta endotoxin family.

In terms of biological role, promotes colloidosmotic lysis by binding to the midgut epithelial cells of many lepidopteran larvae. The chain is Pesticidal crystal protein Cry1Ja (cry1Ja) from Bacillus thuringiensis.